A 223-amino-acid polypeptide reads, in one-letter code: uncharacterized protein (223 aa).

This is an uncharacterized protein from Aquifex aeolicus (strain VF5).